Reading from the N-terminus, the 505-residue chain is Midnolin (505 aa).

A Ubiquitin-like domain is found at 32-106 (MSLAIHSTTG…LTLVPTVEAG (75 aa)). Disordered regions lie at residues 155–176 (PWHR…VSDF), 228–305 (SIAT…SRKP), and 440–485 (RLRR…GLDF). The segment covering 238 to 262 (RPVSSAARVPPVSSSPSSPVSPSPV) has biased composition (low complexity). The segment covering 263–282 (TAGTFQSHAASTTCPEQTDC) has biased composition (polar residues). Positions 283 to 300 (SPPASSNTTSTPGSSPTP) are enriched in low complexity.

Interacts with GCK; the interaction occurs preferentially at low glucose levels. Interacts with the proteasome.

Its subcellular location is the nucleus. It is found in the cytoplasm. The protein localises to the cytosol. The protein resides in the nucleolus. Its function is as follows. Facilitates the ubiquitin-independent proteasomal degradation of stimulus-induced transcription factors such as FOSB, EGR1, NR4A1, and IRF4 to the proteasome for degradation. Promotes also the degradation of other substrates such as CBX4. Plays a role in inhibiting the activity of glucokinase GCK and both glucose-induced and basal insulin secretion. The polypeptide is Midnolin (Rattus norvegicus (Rat)).